The sequence spans 360 residues: 3-dehydroquinate synthase (360 aa).

NAD(+) is bound by residues 70–75 (DGEKYK), 104–108 (GVIGD), 128–129 (TT), lysine 141, and lysine 150. Positions 183, 246, and 263 each coordinate Zn(2+).

This sequence belongs to the sugar phosphate cyclases superfamily. Dehydroquinate synthase family. Co(2+) is required as a cofactor. It depends on Zn(2+) as a cofactor. NAD(+) serves as cofactor.

The protein resides in the cytoplasm. It carries out the reaction 7-phospho-2-dehydro-3-deoxy-D-arabino-heptonate = 3-dehydroquinate + phosphate. Its pathway is metabolic intermediate biosynthesis; chorismate biosynthesis; chorismate from D-erythrose 4-phosphate and phosphoenolpyruvate: step 2/7. Its function is as follows. Catalyzes the conversion of 3-deoxy-D-arabino-heptulosonate 7-phosphate (DAHP) to dehydroquinate (DHQ). This chain is 3-dehydroquinate synthase, found in Acinetobacter baumannii (strain SDF).